The sequence spans 350 residues: MDTSLPSAILNNMVTATLILDDGLAIRYANPAAELLFSQSAKRIVEQSLSQLIQHASLDLALLTQPLQSGQSITDSDVTFVVDGRPLMLEVTVSPITWQKQLMLLVEMRKIDQQRRLSQELNQHAQQQAAKLLVRGLAHEIKNPLGGLRGAAQLLEKMLPDPSLTEYTHIIIEQADRLRALVDRLLGPQKPGKKTQENLHQILEKVRQLVELESQRSIVIERDYDPSLPEILMDADQIEQAMLNIVSNAAQILSHQEHGKITIRTRTVHQANIHGKRCKLAARVEITDNGPGIPPELQDTLFYPMVSGREGGTGLGLSISQNLIDQHNGKIDVESWPGHTTFTIYLPILR.

A PAS domain is found at 4–67 (SLPSAILNNM…LDLALLTQPL (64 aa)). Positions 136 to 350 (GLAHEIKNPL…TFTIYLPILR (215 aa)) constitute a Histidine kinase domain. Position 139 is a phosphohistidine; by autocatalysis (His-139). Lys-330 contacts ATP.

Post-translationally, autophosphorylated.

The protein localises to the cytoplasm. The enzyme catalyses ATP + protein L-histidine = ADP + protein N-phospho-L-histidine.. In terms of biological role, member of the two-component regulatory system NtrB/NtrC, which controls expression of the nitrogen-regulated (ntr) genes in response to nitrogen limitation. Under conditions of nitrogen limitation, NtrB autophosphorylates and transfers the phosphoryl group to NtrC. In the presence of nitrogen, acts as a phosphatase that dephosphorylates and inactivates NtrC. The polypeptide is Sensory histidine kinase/phosphatase NtrB (ntrB) (Vibrio alginolyticus).